Reading from the N-terminus, the 183-residue chain is Dual-action ribosomal maturation protein DarP (183 aa).

It belongs to the DarP family.

The protein resides in the cytoplasm. Functionally, member of a network of 50S ribosomal subunit biogenesis factors which assembles along the 30S-50S interface, preventing incorrect 23S rRNA structures from forming. Promotes peptidyl transferase center (PTC) maturation. In Shigella flexneri, this protein is Dual-action ribosomal maturation protein DarP.